Reading from the N-terminus, the 799-residue chain is Disintegrin and metalloproteinase domain-containing protein B (799 aa).

An N-terminal signal peptide occupies residues 1–23; the sequence is MKAFSCLLSVIATAASLFQHVDA. Over 24 to 707 the chain is Extracellular; the sequence is RSHARDKLNN…VSDWVSRHKP (684 aa). 5 N-linked (GlcNAc...) asparagine glycosylation sites follow: Asn-33, Asn-227, Asn-228, Asn-314, and Asn-408. The 240-residue stretch at 272–511 folds into the Peptidase M12B domain; that stretch reads KVALIGVVAD…RTILTSCLTT (240 aa). 3 cysteine pairs are disulfide-bonded: Cys-396-Cys-496, Cys-449-Cys-460, and Cys-581-Cys-601. His-432 provides a ligand contact to Zn(2+). Glu-433 is a catalytic residue. Zn(2+) contacts are provided by His-436 and His-442. Residues 520–609 enclose the Disintegrin domain; sequence GQQCGNGIVE…DCPHDIHSKD (90 aa). Residues 708–728 form a helical membrane-spanning segment; the sequence is IVIGVAVGAGCLLLLAIASCI. The Cytoplasmic portion of the chain corresponds to 729–799; the sequence is CGRSRRQRPR…PGHLPSTRYA (71 aa). The interval 753–799 is disordered; it reads VYNGWNGAPPNAQQSSPGGHPPYNNIPPPINAPPPAYPGHLPSTRYA. Positions 776-789 are enriched in pro residues; sequence NNIPPPINAPPPAY.

Zn(2+) serves as cofactor.

It localises to the membrane. In terms of biological role, probable zinc protease. This chain is Disintegrin and metalloproteinase domain-containing protein B (ADM-B), found in Arthroderma benhamiae (strain ATCC MYA-4681 / CBS 112371) (Trichophyton mentagrophytes).